A 361-amino-acid polypeptide reads, in one-letter code: Phospho-N-acetylmuramoyl-pentapeptide-transferase (361 aa).

10 helical membrane passes run 27–47 (GAIVTAVLFVFLFGPGIISTL), 72–92 (TPTMGGLMIFSGLIVATLLWA), 94–114 (LSNLYVWVVLFVTTGFGLIGF), 133–153 (ARLAIEALIAGIAVVLMINAG), 169–189 (LLLDLGWFFVVFGAFVIVAAG), 200–220 (GLAIVPVMIAAASFGMISYLS), 237–257 (VGELAVICGAIIGAGLGFLWF), 264–284 (IFMGDTGSLALGGLLGSIAVA), 289–309 (IVLAVIGGLFVLEAVSVIVQV), and 338–358 (QVVIRFWIIAVVLALLGLATL).

Belongs to the glycosyltransferase 4 family. MraY subfamily. Mg(2+) is required as a cofactor.

The protein resides in the cell inner membrane. It catalyses the reaction UDP-N-acetyl-alpha-D-muramoyl-L-alanyl-gamma-D-glutamyl-meso-2,6-diaminopimeloyl-D-alanyl-D-alanine + di-trans,octa-cis-undecaprenyl phosphate = di-trans,octa-cis-undecaprenyl diphospho-N-acetyl-alpha-D-muramoyl-L-alanyl-D-glutamyl-meso-2,6-diaminopimeloyl-D-alanyl-D-alanine + UMP. The protein operates within cell wall biogenesis; peptidoglycan biosynthesis. In terms of biological role, catalyzes the initial step of the lipid cycle reactions in the biosynthesis of the cell wall peptidoglycan: transfers peptidoglycan precursor phospho-MurNAc-pentapeptide from UDP-MurNAc-pentapeptide onto the lipid carrier undecaprenyl phosphate, yielding undecaprenyl-pyrophosphoryl-MurNAc-pentapeptide, known as lipid I. The chain is Phospho-N-acetylmuramoyl-pentapeptide-transferase from Azorhizobium caulinodans (strain ATCC 43989 / DSM 5975 / JCM 20966 / LMG 6465 / NBRC 14845 / NCIMB 13405 / ORS 571).